A 231-amino-acid chain; its full sequence is Uracil phosphoribosyltransferase (231 aa).

Position 38 to 42 (38 to 42) interacts with GTP; the sequence is KGLVR. Residues Arg87, Arg112, and 140-148 contribute to the 5-phospho-alpha-D-ribose 1-diphosphate site; that span reads DPMIATGST. Uracil contacts are provided by residues Ile203 and 208–210; that span reads GDA. Asp209 is a binding site for 5-phospho-alpha-D-ribose 1-diphosphate.

It belongs to the UPRTase family. It depends on Mg(2+) as a cofactor.

It carries out the reaction UMP + diphosphate = 5-phospho-alpha-D-ribose 1-diphosphate + uracil. It participates in pyrimidine metabolism; UMP biosynthesis via salvage pathway; UMP from uracil: step 1/1. With respect to regulation, allosterically activated by GTP. Catalyzes the conversion of uracil and 5-phospho-alpha-D-ribose 1-diphosphate (PRPP) to UMP and diphosphate. This is Uracil phosphoribosyltransferase from Methanococcus maripaludis (strain DSM 14266 / JCM 13030 / NBRC 101832 / S2 / LL).